Reading from the N-terminus, the 334-residue chain is Leucine carboxyl methyltransferase 1 (334 aa).

S-adenosyl-L-methionine contacts are provided by residues K37, R73, G98, D122, 171–172 (DL), and E198.

This sequence belongs to the methyltransferase superfamily. LCMT family.

It catalyses the reaction [phosphatase 2A protein]-C-terminal L-leucine + S-adenosyl-L-methionine = [phosphatase 2A protein]-C-terminal L-leucine methyl ester + S-adenosyl-L-homocysteine. Methylates the carboxyl group of the C-terminal leucine residue of protein phosphatase 2A catalytic subunits to form alpha-leucine ester residues. This chain is Leucine carboxyl methyltransferase 1 (LCMT1), found in Homo sapiens (Human).